The chain runs to 196 residues: MSLQIDAVILAGGMARRMGGNDKGLVELQAQPMIKHAIDRIKPQVREILINANRNQTRYAEFGYQVISDEDSGYLGPLAGMITAMGQTQAKYLLVVPCDCPLLPADLVERMLSQLEKENADLAVASDGKREQPVVLLLKPELRDSMKAFLDAGERKIDFWYAKHNCAVADFSDQPNAFVNVNTPEQKQQLSEAIAK.

Residues 10 to 12 (LAG), Lys-23, Asn-51, Asp-69, and Asp-99 contribute to the GTP site. Residue Asp-99 coordinates Mg(2+).

The protein belongs to the MobA family. As to quaternary structure, monomer. Mg(2+) is required as a cofactor.

Its subcellular location is the cytoplasm. The catalysed reaction is Mo-molybdopterin + GTP + H(+) = Mo-molybdopterin guanine dinucleotide + diphosphate. Its function is as follows. Transfers a GMP moiety from GTP to Mo-molybdopterin (Mo-MPT) cofactor (Moco or molybdenum cofactor) to form Mo-molybdopterin guanine dinucleotide (Mo-MGD) cofactor. The chain is Molybdenum cofactor guanylyltransferase from Shewanella sediminis (strain HAW-EB3).